An 86-amino-acid polypeptide reads, in one-letter code: Small ribosomal subunit protein bS16 (86 aa).

It belongs to the bacterial ribosomal protein bS16 family.

In Xanthomonas campestris pv. campestris (strain 8004), this protein is Small ribosomal subunit protein bS16.